Here is a 110-residue protein sequence, read N- to C-terminus: Ig lambda-1 chain V region S178 (110 aa).

Residues 1–106 (QAVVTQESAL…RWVFGGGTKL (106 aa)) enclose the Ig-like domain.

This is Ig lambda-1 chain V region S178 from Mus musculus (Mouse).